The sequence spans 399 residues: Glutathione S-transferase LANCL1 (399 aa).

Residue Ala-2 is modified to N-acetylalanine. The residue at position 142 (Lys-142) is an N6-acetyllysine. Cys-276 contributes to the Zn(2+) binding site. Lys-317 serves as a coordination point for glutathione. Positions 322 and 323 each coordinate Zn(2+). Glutathione is bound at residue 364-367; the sequence is RTPD.

This sequence belongs to the LanC-like protein family. As to quaternary structure, interacts with the C-terminal of STOM. Interacts with the EPS8 SH3 domain. Interaction with EPS8 is inhibited by glutathione binding. In terms of tissue distribution, strongly expressed in the brain, testis and skeletal muscle. Expressed in the neurons of the cerebellum, the germinal cells of the seminiferous tubules in testis, in liver hepoatocytes and in cardiac myocytes.

It is found in the cytoplasm. The protein resides in the cell membrane. The enzyme catalyses RX + glutathione = an S-substituted glutathione + a halide anion + H(+). It carries out the reaction 1-chloro-2,4-dinitrobenzene + glutathione = 2,4-dinitrophenyl-S-glutathione + chloride + H(+). Functions as a glutathione transferase. Catalyzes conjugation of the glutathione (GSH) to artificial substrates 1-chloro-2,4-dinitrobenzene (CDNB) and p-nitrophenyl acetate. Mitigates neuronal oxidative stress during normal postnatal development and in response to oxidative stresses probably through GSH antioxidant defense mechanism. May play a role in EPS8 signaling. Binds glutathione. The protein is Glutathione S-transferase LANCL1 of Rattus norvegicus (Rat).